The primary structure comprises 93 residues: DNA-directed RNA polymerase subunit omega (93 aa).

The protein belongs to the RNA polymerase subunit omega family. As to quaternary structure, the RNAP catalytic core consists of 2 alpha, 1 beta, 1 beta' and 1 omega subunit. When a sigma factor is associated with the core the holoenzyme is formed, which can initiate transcription.

The enzyme catalyses RNA(n) + a ribonucleoside 5'-triphosphate = RNA(n+1) + diphosphate. Promotes RNA polymerase assembly. Latches the N- and C-terminal regions of the beta' subunit thereby facilitating its interaction with the beta and alpha subunits. In Actinobacillus pleuropneumoniae serotype 3 (strain JL03), this protein is DNA-directed RNA polymerase subunit omega.